The primary structure comprises 289 residues: Inorganic pyrophosphatase (289 aa).

An N-acetylserine modification is found at Ser-2. N6-acetyllysine is present on Lys-57. Residues Asp-116, Asp-121, and Asp-153 each contribute to the Mg(2+) site. Residue Lys-228 is modified to N6-acetyllysine. Residue Ser-250 is modified to Phosphoserine.

It belongs to the PPase family. Homodimer. Requires Mg(2+) as cofactor. Expressed ubiquitously.

It localises to the cytoplasm. The enzyme catalyses diphosphate + H2O = 2 phosphate + H(+). This chain is Inorganic pyrophosphatase (PPA1), found in Homo sapiens (Human).